The chain runs to 306 residues: Putative F-box protein At1g47300 (306 aa).

Residues 1-45 (MISDSIPKELILEIMLRLPAKSIARFHCVSKQWASMLSRPYFTEL) enclose the F-box domain. Residues 235-278 (DPKLLESKEEEEEEEEEEEEEEEEEEEEEEEEEEEESKEREKEK) form a disordered region. Residues 242-270 (KEEEEEEEEEEEEEEEEEEEEEEEEEEEE) show a composition bias toward acidic residues.

This chain is Putative F-box protein At1g47300, found in Arabidopsis thaliana (Mouse-ear cress).